The primary structure comprises 130 residues: DNA-directed RNA polymerase subunit omega (130 aa).

The interval 107 to 130 (SLDVSQESHDDEIDDQDSGEEVPI) is disordered. Acidic residues predominate over residues 115–130 (HDDEIDDQDSGEEVPI).

This sequence belongs to the RNA polymerase subunit omega family. As to quaternary structure, the RNAP catalytic core consists of 2 alpha, 1 beta, 1 beta' and 1 omega subunit. When a sigma factor is associated with the core the holoenzyme is formed, which can initiate transcription.

It catalyses the reaction RNA(n) + a ribonucleoside 5'-triphosphate = RNA(n+1) + diphosphate. In terms of biological role, promotes RNA polymerase assembly. Latches the N- and C-terminal regions of the beta' subunit thereby facilitating its interaction with the beta and alpha subunits. The protein is DNA-directed RNA polymerase subunit omega of Wolbachia pipientis subsp. Culex pipiens (strain wPip).